Consider the following 417-residue polypeptide: Nucleosome assembly protein (417 aa).

Positions 1–47 (MSDPIRTKPKSSMQIDNAPTPHNTPASVLNPSYLKNGNPVRAQAQEQ) are disordered. Polar residues predominate over residues 10-35 (KSSMQIDNAPTPHNTPASVLNPSYLK). 2 positions are modified to phosphothreonine: T20 and T24. At S27 the chain carries Phosphoserine. Residue K50 forms a Glycyl lysine isopeptide (Lys-Gly) (interchain with G-Cter in ubiquitin) linkage. T53 carries the post-translational modification Phosphothreonine. Residues S69, S76, S82, S98, S104, and S140 each carry the phosphoserine modification. The tract at residues 143–362 (EQPKPEQIAK…IPRAVDWFTG (220 aa)) is interaction with NBA1. Residues S159 and S177 each carry the phosphoserine; by CK2 modification. The H-T-H motif DNA-binding region spans 330–356 (LEEDLEERLALDYSIGEQLKDKLIPRA). Residues 364-417 (ALEFEFEEDEEEADEDEDEEEDDDHGLEDDDGESAEEQDDFAGRPEQAPECKQS) form a disordered region. Acidic residues predominate over residues 367-403 (FEFEEDEEEADEDEDEEEDDDHGLEDDDGESAEEQDD). Position 397 is a phosphoserine; by CK2 (S397). Residues 404-417 (FAGRPEQAPECKQS) show a composition bias toward basic and acidic residues.

Belongs to the nucleosome assembly protein (NAP) family. Component of the GIN4 complex composed of at least BNI5, CDC3, CDC10, CDC11, CDC12, GIN4, NAP1 and SHS1 which forms a ring at the bud neck. Homodimer (in-vitro). Interacts with the B-type cyclin CLB2. Interacts with 60S ribosomal protein L18 (RPL18A or RPL18B), CKA2, CKI1, eukaryotic elongation factor 1 complex eEF1A (TEF1 or TEF2), FOL1, HSC82, HTA2, HTB2, HTZ1, KAP114, KCC4, NIS1, SSA1, SSA2, SSB1, SSC1, SHM1, SIP5 and TCO89. Interacts with NBA1. Interacts with histone H3/H4 heterodimers. Phosphorylation by CK2 is required for normal progression through S phase. CK2 phosphorylation is not required for correct bud formation nor histone binding.

The protein localises to the cytoplasm. It localises to the nucleus. Its subcellular location is the bud neck. Acidic protein, which assembles histones into an octamer (in vitro). Involved in the regulation of the localization and the function of the septins during mitosis. Involved in the function of B-type cyclins. The protein is Nucleosome assembly protein of Saccharomyces cerevisiae (strain ATCC 204508 / S288c) (Baker's yeast).